Here is a 33-residue protein sequence, read N- to C-terminus: Protamine-1A (33 aa).

The tract at residues 1–33 is disordered; it reads PRRRRSSSRPVRRRRRPRRVSRRRRRRGGRRRR.

In terms of tissue distribution, testis.

It is found in the nucleus. The protein resides in the chromosome. In terms of biological role, protamines substitute for histones in the chromatin of sperm during the haploid phase of spermatogenesis. They compact sperm DNA into a highly condensed, stable and inactive complex. The sequence is that of Protamine-1A from Oncorhynchus mykiss (Rainbow trout).